We begin with the raw amino-acid sequence, 426 residues long: tRNA methyltransferase 10 homolog C (426 aa).

The transit peptide at 1-41 (MPVLLKMSVSITFLRPFARVLVPFTLHRKRRVLYSTIMQRY) directs the protein to the mitochondrion. Serine 86 carries the phosphoserine modification. Residues 138–166 (LYIKEKMKKARQIKKEMKKAEKEEPKKDQ) adopt a coiled-coil conformation. In terms of domain architecture, SAM-dependent MTase TRM10-type spans 193 to 385 (MGWKGAQAMQ…KFVPSRKHAG (193 aa)).

Belongs to the class IV-like SAM-binding methyltransferase superfamily. TRM10 family. In terms of assembly, component of mitochondrial ribonuclease P, a complex composed of TRMT10C/MRPP1, HSD17B10/MRPP2 and PRORP/MRPP3. Interacts with HSD17B10/MRPP2; forming the MRPP1-MRPP2 subcomplex of the mitochondrial ribonuclease P complex. Interacts with GRSF1.

Its subcellular location is the mitochondrion matrix. The protein resides in the mitochondrion nucleoid. The catalysed reaction is adenosine(9) in tRNA + S-adenosyl-L-methionine = N(1)-methyladenosine(9) in tRNA + S-adenosyl-L-homocysteine + H(+). The enzyme catalyses guanosine(9) in tRNA + S-adenosyl-L-methionine = N(1)-methylguanosine(9) in tRNA + S-adenosyl-L-homocysteine + H(+). It carries out the reaction an adenosine in mRNA + S-adenosyl-L-methionine = an N(1)-methyladenosine in mRNA + S-adenosyl-L-homocysteine + H(+). In terms of biological role, mitochondrial tRNA N(1)-methyltransferase involved in mitochondrial tRNA maturation. Component of mitochondrial ribonuclease P, a complex composed of TRMT10C/MRPP1, HSD17B10/MRPP2 and PRORP/MRPP3, which cleaves tRNA molecules in their 5'-ends. Together with HSD17B10/MRPP2, forms a subcomplex of the mitochondrial ribonuclease P, named MRPP1-MRPP2 subcomplex, which displays functions that are independent of the ribonuclease P activity. The MRPP1-MRPP2 subcomplex catalyzes the formation of N(1)-methylguanine and N(1)-methyladenine at position 9 (m1G9 and m1A9, respectively) in tRNAs; TRMT10C/MRPP1 acting as the catalytic N(1)-methyltransferase subunit. The MRPP1-MRPP2 subcomplex also acts as a tRNA maturation platform: following 5'-end cleavage by the mitochondrial ribonuclease P complex, the MRPP1-MRPP2 subcomplex enhances the efficiency of 3'-processing catalyzed by ELAC2, retains the tRNA product after ELAC2 processing and presents the nascent tRNA to the mitochondrial CCA tRNA nucleotidyltransferase TRNT1 enzyme. In addition to tRNA N(1)-methyltransferase activity, TRMT10C/MRPP1 also acts as a mRNA N(1)-methyltransferase by mediating methylation of adenosine residues at the N(1) position of MT-ND5 mRNA. Associates with mitochondrial DNA complexes at the nucleoids to initiate RNA processing and ribosome assembly. This Bos taurus (Bovine) protein is tRNA methyltransferase 10 homolog C.